The chain runs to 777 residues: MEEDLIQPQPDSETLTSPTSEVGAVELVEHEDDERVEQDPGYVTPPKDGKESVPVSPLTEADYLGGEDDVLLKHVLRQSTIVQEAFKDYSGFPLTVEELSRTYEANLFSPRVPPKKQANGTCEPNPRLNFYPVFAVPEALATYHIFFKNQRIPLSCRANRTQGDRILHLKAGAHIPEIVSLEEVPKIFEGLGKDEKRAANALQKSETENQNVLVELDGDNARLAVLKRTIEVSHFAYPALNLPPKVMRSVMDHLLIKRVEPLDSDQPEQNSEDGQPVVSDDDLARWLDSHDPTTLQERRKMMMAVILVTVELECLQRFFANPQTLRKIEESLHYAFRHGYVRQACKISNVELSNLVSYMGILHENRLGQNVLHCTLQGEARRDYVRDCIYLFLILTWQTAMGVWQQCLEERNLRELEKLLVRNRRELWTAFSERTAACQLADLIFPERLMQTLQNGLPDFVSQSILQNFRSFILERSGILPAMSCALPSDFVPLCYRECPPPLWSHCYLLRLANYLAHHSDLMENSSGEGLLECHCRCNLCTPHRSLVCNTELLSETQVIGTFEIQGPERQEGASNLKLTPALWTSAYLRKFIPEDYHAHQIKFYEDQSRPPKAPLTACVITQSQILAQLQAIQQARQEFLLKKGHGVYLDPQTGEELNTPSPSAAASCRPQKHAAQREQASHCGSAVPKATETARAVGRGGGILGRQPGRGSFRRGGNGELGKSRRGAGGQTPQGRGGRNHRQRRGTVFQRTRSEPASDGESRTVPAAARLVESQP.

Disordered stretches follow at residues M1–V55 and P261–L283. Positions Q9–S20 are enriched in polar residues. The segment at V250–C314 is binding to host EIF4G. The RRM domain occupies R317–T435. Residues Y334 and Y649 each carry the phosphotyrosine; by host modification. The interval P652 to P777 is disordered. The segment covering E656–A665 has biased composition (polar residues). Residues G728 to G738 are compositionally biased toward gly residues. Over residues T753–S763 the composition is skewed to basic and acidic residues.

This sequence belongs to the adenoviridae shutoff protein family. Monomer. Interacts with hexon protein; this interaction allows chaperoning and trimerization of hexon proteins. Interacts (via N-terminus) with host initiation factor EIF4G (via C-terminus). Interacts (via RRM domain) with viral mRNAs that contain the tripartite leader; this interaction allows ribosome shunting and expression of viral late mRNAs. Post-translationally, might be cleaved by the viral protease. In terms of processing, phosphorylated. Tyrosine phosphorylation enhances preferential binding to tripartite leader mRNAs and allows ribosome shunting. Methylated. Asymmetric dimethylation by host PRMT1 of the Arg/Gly-rich region may regulate shutoff protein binding to hexon and promote the capsid assembly in the nucleus.

It localises to the host cytoplasm. Functionally, protein that inhibits host translation while promoting late viral translation by ribosome shunting. Blocks host cap-dependent translation by binding to eIF4G, displacing MKNK1 from cap initiation complexes and preventing EIF4E phosphorylation. Binds to the tripartite leader sequence of viral late mRNAs and recruits host eIF4G, PABPC1/poly-A binding protein and 40S ribosomes subunits on viral mRNAs, allowing ribosome shunting and efficient translation of late viral mRNAs even though conventional translation via ribosome scanning from the cap has been shut off in the host cell. During assembly, acts as a chaperone protein that helps hexon proteins assembly into trimers. In Homo sapiens (Human), this protein is Shutoff protein.